The following is a 393-amino-acid chain: Transcription factor bHLH112 (393 aa).

Disordered stretches follow at residues 248-277 and 332-356; these read TRAQ…SPLP and KQGA…NENH. Positions 254-265 are enriched in basic and acidic residues; the sequence is SLKRAKDNESAA. The bHLH domain occupies 270–319; it reads VTTPSPLPTFKVRKENLRDQITSLQQLVSPFGKTDTASVLQEAIEYIKFL. Low complexity predominate over residues 332–347; it reads KQGASNQQQQQISGKS.

As to quaternary structure, homodimer.

Its subcellular location is the nucleus. The protein is Transcription factor bHLH112 (BHLH112) of Arabidopsis thaliana (Mouse-ear cress).